The following is a 1279-amino-acid chain: MALSRGTSLILHEDPEKIPSPNSCEVPGIMSNTTPRPTPDLALAPPPEHALALTPALHPALSPDPEGVSGPVSNDIPSHNASGATTPSSTQINTVDTADQGLNHTSGPDAAGTLCPDSQPARIPSSTQANVLSPENSSRPCSEDVSKSFSSKVFGLGQSNSNPSRPEPNLYIKALSREALVRSHNISRQGSQVPLLLPSNTSLDRLHSGNISKVNLGIAPNSNEAITLTSHTIFASISKEALSAPWNTGSKGSINGTSTIQPRSGLNVTVTHASHVSMIPGSSEGLSLQSSARVPNSTLSPSSCMTLIMDSESPSMDSSFLVTDTSTLTLSSHRDYSEDNSIRTMPLEENLGKWDSLQGVTALQSPPEGTSEDVKVNEAEKRNHDNKAALVANIITYQKNQEMVEMKEEKEATVKMMMRQIQEEPLDSLLSPARRQAMEILAQLSHTKPILSVRERVELVNTCVRSVFSLPSVQAMQEKDESKAEVIQILYYQTLDSLQKLLNALFIEDPTPTGLKSILEPLGPWMNSGKAHERARAVNSNVSVLNHTLVTLPFLISSGFPTLGLLLGRLLLRIGDPDEEIGREALDGITILYTILDLQKRTKNKEDTNKKELYENNKRFLGPYNPVSPCQNILRVIAEFGDFLGPQQVRDLLLAALEGLKGISETQGKDSGEMMQLASEVMLSSVLEWYRHRALEVIPEIMQGIYMQLTHIQEPRAREVALLPISFLASSFMTEVVVALLMCPLPLDSNGAEMWRQLILRKPSCDVRDLLDLLLTSLKEKPVTKKGRASIVPLAAASGLCELLSVNSCVGRVRRIYPQLLLALLIQVHYHIGLNLPSRMAPRKDSKDDTQPPLFIPVRWMVKVVKTLLLKMGCSYESAFLEEQGGWELMGQAESHYRGVSLLARAMVHYSCQELCRILYLLIPLLERGDERHKITATAFFVELFRMEQVRRIPEEYSLGRMVEGLSHRDPIMNVLSIRGLVILACKSEKMAKVQSLLPSMVKSLKNMDGMLVVEAVHDLKRIFKGQGKKLTDSAVYVEMLQILLPHFTDAREMVRASCINVYGKVVKKLQTPRTQAMEEQLTSTLMPLLFIIQEGNAKVSQKCVKTLVCCSSFMNWELPKKAYSQKPWDNQQLTVTKICKYLVSSHRDNVFTFLNQSLEYAKNSRASLRKSSVIFIGSLVPCMENMMTEERLNEVKATLEILRHDPEASVCICAAQAQDQIMATCWRNSWPLLYGDSWVCDPSSMHRWSPSCENLPTSHQRRSWIMQALASWKMSLKQ.

Residues 1–145 (MALSRGTSLI…NSSRPCSEDV (145 aa)) are disordered. Positions 39–61 (PDLALAPPPEHALALTPALHPAL) are enriched in low complexity. Polar residues-rich tracts occupy residues 71–106 (PVSNDIPSHNASGATTPSSTQINTVDTADQGLNHTS) and 124–140 (PSSTQANVLSPENSSRP). N-linked (GlcNAc...) asparagine glycosylation is found at N200, N210, N255, N267, and N296. S356 is modified (phosphoserine). N541 carries an N-linked (GlcNAc...) asparagine glycan. 2 helical membrane-spanning segments follow: residues 548–568 (TLVTLPFLISSGFPTLGLLLG) and 722–742 (LLPISFLASSFMTEVVVALLM). 4 HEAT repeats span residues 913 to 950 (QELCRILYLLIPLLERGDERHKITATAFFVELFRMEQV), 992 to 1029 (AKVQSLLPSMVKSLKNMDGMLVVEAVHDLKRIFKGQGK), 1035 to 1072 (AVYVEMLQILLPHFTDAREMVRASCINVYGKVVKKLQT), and 1080 to 1117 (EQLTSTLMPLLFIIQEGNAKVSQKCVKTLVCCSSFMNW).

It localises to the membrane. This chain is Maestro heat-like repeat-containing protein family member 7 (Mroh7), found in Mus musculus (Mouse).